Here is a 221-residue protein sequence, read N- to C-terminus: MGPVPEEHQRESETVASNGANESGAAVTGIPQREAKHVSGTAVSGLAKRYASALYSYAGDSGDLDGVIARIEALGRLIDESADLRSLLGSPLVDVNRARDAVLAVLDRQGFTRIERNFVGTVANNRRLGSLRSIISAFAVLVAEKRGEAVAVVESAHELTEVQEHQLRASLIEAGYGNVRIEKHVDPSLLGGLVVRIGTRLYDTSLKSRLQRLQYAMKGAA.

Residues 1-13 show a composition bias toward basic and acidic residues; that stretch reads MGPVPEEHQRESE. Residues 1–31 are disordered; sequence MGPVPEEHQRESETVASNGANESGAAVTGIP.

This sequence belongs to the ATPase delta chain family. In terms of assembly, F-type ATPases have 2 components, F(1) - the catalytic core - and F(0) - the membrane proton channel. F(1) has five subunits: alpha(3), beta(3), gamma(1), delta(1), epsilon(1). F(0) has three main subunits: a(1), b(2) and c(10-14). The alpha and beta chains form an alternating ring which encloses part of the gamma chain. F(1) is attached to F(0) by a central stalk formed by the gamma and epsilon chains, while a peripheral stalk is formed by the delta and b chains.

It localises to the cell inner membrane. Functionally, f(1)F(0) ATP synthase produces ATP from ADP in the presence of a proton or sodium gradient. F-type ATPases consist of two structural domains, F(1) containing the extramembraneous catalytic core and F(0) containing the membrane proton channel, linked together by a central stalk and a peripheral stalk. During catalysis, ATP synthesis in the catalytic domain of F(1) is coupled via a rotary mechanism of the central stalk subunits to proton translocation. In terms of biological role, this protein is part of the stalk that links CF(0) to CF(1). It either transmits conformational changes from CF(0) to CF(1) or is implicated in proton conduction. In Granulibacter bethesdensis (strain ATCC BAA-1260 / CGDNIH1), this protein is ATP synthase subunit delta.